A 120-amino-acid chain; its full sequence is Dynein 11 kDa light chain, flagellar outer arm (120 aa).

Belongs to the dynein light chain family. Consists of at least 3 heavy chains (alpha, beta and gamma), 2 intermediate chains and 8 light chains.

It is found in the cytoplasm. It localises to the cytoskeleton. The protein localises to the flagellum axoneme. In Chlamydomonas reinhardtii (Chlamydomonas smithii), this protein is Dynein 11 kDa light chain, flagellar outer arm.